Reading from the N-terminus, the 416-residue chain is Adenylosuccinate synthetase (416 aa).

Residues 13–19 (GDEGKGK) and 41–43 (GHT) each bind GTP. Aspartate 14 serves as the catalytic Proton acceptor. Positions 14 and 41 each coordinate Mg(2+). IMP-binding positions include 14 to 17 (DEGK), 39 to 42 (NAGH), threonine 126, arginine 140, glutamine 220, threonine 235, and arginine 299. Residue histidine 42 is the Proton donor of the active site. 295–301 (TTTGRRR) serves as a coordination point for substrate. GTP-binding positions include arginine 301, 327–329 (KLD), and 405–407 (STS).

Belongs to the adenylosuccinate synthetase family. As to quaternary structure, homodimer. Requires Mg(2+) as cofactor.

It is found in the cytoplasm. The enzyme catalyses IMP + L-aspartate + GTP = N(6)-(1,2-dicarboxyethyl)-AMP + GDP + phosphate + 2 H(+). Its pathway is purine metabolism; AMP biosynthesis via de novo pathway; AMP from IMP: step 1/2. Functionally, plays an important role in the de novo pathway of purine nucleotide biosynthesis. Catalyzes the first committed step in the biosynthesis of AMP from IMP. This is Adenylosuccinate synthetase from Campylobacter curvus (strain 525.92).